Consider the following 791-residue polypeptide: Subtilisin-like protease SBT5.6 (791 aa).

A signal peptide spans 1–20 (MKKLTSLFPLLFLIPLLASC). Residues 21 to 108 (AEEKQVYIVY…KSHPRKYEAH (88 aa)) constitute a propeptide, activation peptide. One can recognise an Inhibitor I9 domain in the interval 26-104 (VYIVYFGEHK…VSVFKSHPRK (79 aa)). A Peptidase S8 domain is found at 134–645 (ADDRFRVGRN…SGHFRPTKAA (512 aa)). Aspartate 160 acts as the Charge relay system in catalysis. 2 N-linked (GlcNAc...) asparagine glycosylation sites follow: asparagine 193 and asparagine 219. The active-site Charge relay system is the histidine 235. Residues 400-494 (FAPLVYASNV…VTPTVVDKIL (95 aa)) form the PA domain. Asparagine 417 is a glycosylation site (N-linked (GlcNAc...) asparagine). The active-site Charge relay system is serine 578. 3 N-linked (GlcNAc...) asparagine glycosylation sites follow: asparagine 666, asparagine 713, and asparagine 761.

The protein belongs to the peptidase S8 family.

It localises to the secreted. The polypeptide is Subtilisin-like protease SBT5.6 (Arabidopsis thaliana (Mouse-ear cress)).